Reading from the N-terminus, the 179-residue chain is Putative BPIFA4P protein (179 aa).

Residues 1–20 (MLNVSGLFVLLCGLLVSSSA) form the signal peptide.

The protein belongs to the BPI/LBP/Plunc superfamily. Plunc family. As to expression, expressed in breast cancer and salivary gland.

It is found in the secreted. Its function is as follows. Major protein in sweat, has surfactant properties. This is Putative BPIFA4P protein (BPIFA4P) from Homo sapiens (Human).